The following is a 125-amino-acid chain: uncharacterized protein (125 aa).

It is found in the mitochondrion. This is an uncharacterized protein from Paramecium tetraurelia.